The primary structure comprises 464 residues: Soluble pyridine nucleotide transhydrogenase (464 aa).

35–44 (DSRRQVGGNC) lines the FAD pocket.

It belongs to the class-I pyridine nucleotide-disulfide oxidoreductase family. The cofactor is FAD.

The protein localises to the cytoplasm. It carries out the reaction NAD(+) + NADPH = NADH + NADP(+). Functionally, conversion of NADPH, generated by peripheral catabolic pathways, to NADH, which can enter the respiratory chain for energy generation. In Pseudomonas putida (strain W619), this protein is Soluble pyridine nucleotide transhydrogenase.